The sequence spans 1077 residues: ATP-dependent helicase/deoxyribonuclease subunit B (1077 aa).

It belongs to the helicase family. AddB/RexB type 2 subfamily. Heterodimer of AddA and RexB. Mg(2+) is required as a cofactor.

Its function is as follows. The heterodimer acts as both an ATP-dependent DNA helicase and an ATP-dependent, dual-direction single-stranded exonuclease. Recognizes the chi site generating a DNA molecule suitable for the initiation of homologous recombination. This subunit has 5' -&gt; 3' nuclease activity but not helicase activity. In Streptococcus agalactiae serotype Ia (strain ATCC 27591 / A909 / CDC SS700), this protein is ATP-dependent helicase/deoxyribonuclease subunit B.